The primary structure comprises 186 residues: Mating-type-like protein ALPHA2 (186 aa).

The segment at residues 108–170 is a DNA-binding region (homeobox; TALE-type); sequence ASYRGHRFTR…NRRRKQKSIY (63 aa).

It belongs to the TALE/M-ATYP homeobox family.

The protein resides in the nucleus. Its function is as follows. Mating type proteins are sequence specific DNA-binding proteins that act as master switches in yeast differentiation by controlling gene expression in a cell type-specific fashion. The polypeptide is Mating-type-like protein ALPHA2 (MTL1ALPHA2) (Candida glabrata (strain ATCC 2001 / BCRC 20586 / JCM 3761 / NBRC 0622 / NRRL Y-65 / CBS 138) (Yeast)).